The following is a 96-amino-acid chain: Large ribosomal subunit protein eL14 (96 aa).

It belongs to the eukaryotic ribosomal protein eL14 family.

The protein is Large ribosomal subunit protein eL14 of Saccharolobus islandicus (strain Y.N.15.51 / Yellowstone #2) (Sulfolobus islandicus).